Reading from the N-terminus, the 201-residue chain is MITIRKAEFVTSAVNIKGYPELTGPEIALAGRSNVGKSSLINKFINRRNLARTGNTPGKTQMLNFYRINDQWSFVDLPGYGYAKVSKEIKANWGKMMEEYFSRRENLRAVIQVVDIRHVPSVEDQEMHAFLRNRGIPVLVVATKADKISKGQWGKHLSQIAKALHIPDWHIIITYSAETGLGVPELHEAVEEILSMDNEDS.

In terms of domain architecture, EngB-type G spans 23 to 196 (TGPEIALAGR…HEAVEEILSM (174 aa)). GTP is bound by residues 31 to 38 (GRSNVGKS), 58 to 62 (GKTQM), 76 to 79 (DLPG), 143 to 146 (TKAD), and 175 to 177 (YSA). Residues Ser38 and Thr60 each contribute to the Mg(2+) site.

The protein belongs to the TRAFAC class TrmE-Era-EngA-EngB-Septin-like GTPase superfamily. EngB GTPase family. Requires Mg(2+) as cofactor.

Its function is as follows. Necessary for normal cell division and for the maintenance of normal septation. The protein is Probable GTP-binding protein EngB of Desulfitobacterium hafniense (strain DSM 10664 / DCB-2).